Reading from the N-terminus, the 408-residue chain is Lysosome-associated membrane glycoprotein 3 (408 aa).

The first 20 residues, 1 to 20 (MPGQTSAVAVLLCLAVILHG), serve as a signal peptide directing secretion. Residues 21-373 (YQIREKEFPE…IVDECLSDYT (353 aa)) lie on the Lumenal side of the membrane. Asn55 and Asn225 each carry an N-linked (GlcNAc...) asparagine glycan. A disulfide bridge connects residues Cys230 and Cys267. Residue Asn284 is glycosylated (N-linked (GlcNAc...) asparagine). Cys331 and Cys368 are disulfide-bonded. The chain crosses the membrane as a helical span at residues 374–394 (VVLPVVGIIVVVLCVVGLGIY). The Cytoplasmic segment spans residues 395 to 408 (KIRQRRQSSAYQRI).

The protein belongs to the LAMP family. In terms of assembly, monomer. Interacts with FURIN.

Its subcellular location is the cell surface. It localises to the lysosome membrane. The protein localises to the cytoplasmic vesicle membrane. It is found in the early endosome membrane. Lysosomal membrane glycoprotein which plays a role in the unfolded protein response (UPR) that contributes to protein degradation and cell survival during proteasomal dysfunction. Plays a role in the process of fusion of the lysosome with the autophagosome, thereby modulating the autophagic process. Promotes hepatocellular lipogenesis through activation of the PI3K/Akt pathway. May also play a role in dendritic cell function and in adaptive immunity. The sequence is that of Lysosome-associated membrane glycoprotein 3 (Lamp3) from Rattus norvegicus (Rat).